The chain runs to 943 residues: Isoleucine--tRNA ligase (943 aa).

Residues 59 to 69 carry the 'HIGH' region motif; sequence PYANGQIHLGH. Glu577 is a binding site for L-isoleucyl-5'-AMP. The 'KMSKS' region motif lies at 618 to 622; the sequence is KMSKS. ATP is bound at residue Lys621. The Zn(2+) site is built by Cys906, Cys909, Cys926, and Cys929.

It belongs to the class-I aminoacyl-tRNA synthetase family. IleS type 1 subfamily. As to quaternary structure, monomer. Zn(2+) is required as a cofactor.

The protein resides in the cytoplasm. It carries out the reaction tRNA(Ile) + L-isoleucine + ATP = L-isoleucyl-tRNA(Ile) + AMP + diphosphate. Functionally, catalyzes the attachment of isoleucine to tRNA(Ile). As IleRS can inadvertently accommodate and process structurally similar amino acids such as valine, to avoid such errors it has two additional distinct tRNA(Ile)-dependent editing activities. One activity is designated as 'pretransfer' editing and involves the hydrolysis of activated Val-AMP. The other activity is designated 'posttransfer' editing and involves deacylation of mischarged Val-tRNA(Ile). The sequence is that of Isoleucine--tRNA ligase from Xanthomonas oryzae pv. oryzae (strain MAFF 311018).